The primary structure comprises 335 residues: MKEILNALYHQKDLNDEEVKKLFTLIIHEKVSPVQLGTILCALKIKGESFKEISVAATTLLEHAPKPFDSGLDLIDNCGTGGDGLKTINVSTIAALIASSMGLSMAKHGSRSVSSHSGSADLLENLGVNIEMNPTQLENCFKQTHFGFLFAPLYHQSFKKSAPLRKELFTKTIFNCLGPLINPLRPKIQLLGVYDRSLCKTMALALKALGVKRAMVVNGGGTDEIVLHDITHACELKNSEILEYDLSAKDFDLPPYDLKELQIENAQESVQACLDILGNKGKDSHTMVVVANVASLLYLSHKAKDLKEGVSMTLEHLKTKAPYTHLQKIIRLSHA.

5-phospho-alpha-D-ribose 1-diphosphate-binding positions include glycine 79, 82–83, threonine 87, 89–92, 107–115, and serine 119; these read GD, NVST, and KHGSRSVSS. Residue glycine 79 participates in anthranilate binding. Serine 91 serves as a coordination point for Mg(2+). Arginine 165 is a binding site for anthranilate. Mg(2+) contacts are provided by aspartate 223 and glutamate 224.

The protein belongs to the anthranilate phosphoribosyltransferase family. Homodimer. It depends on Mg(2+) as a cofactor.

The catalysed reaction is N-(5-phospho-beta-D-ribosyl)anthranilate + diphosphate = 5-phospho-alpha-D-ribose 1-diphosphate + anthranilate. The protein operates within amino-acid biosynthesis; L-tryptophan biosynthesis; L-tryptophan from chorismate: step 2/5. Functionally, catalyzes the transfer of the phosphoribosyl group of 5-phosphorylribose-1-pyrophosphate (PRPP) to anthranilate to yield N-(5'-phosphoribosyl)-anthranilate (PRA). This is Anthranilate phosphoribosyltransferase from Helicobacter pylori (strain HPAG1).